The sequence spans 280 residues: Undecaprenyl-diphosphatase (280 aa).

7 consecutive transmembrane segments (helical) span residues 1-21 (MTLLQALILAIVQGITEPFPV), 45-65 (FLPFLTMLHVGTLVALAGVFW), 90-110 (IFGLLVIATIPAVLVGWLLEH), 115-135 (VFGTPLAVAGFLILNGFLLMV), 151-171 (IATLAPKDAVIIGIWQCLALL), 226-246 (IMVQCVAGAVVAGLTALICSL), and 260-280 (LTPFGVYCVLAGLFAGAVILL).

Belongs to the UppP family.

Its subcellular location is the cell inner membrane. The catalysed reaction is di-trans,octa-cis-undecaprenyl diphosphate + H2O = di-trans,octa-cis-undecaprenyl phosphate + phosphate + H(+). Catalyzes the dephosphorylation of undecaprenyl diphosphate (UPP). Confers resistance to bacitracin. This chain is Undecaprenyl-diphosphatase, found in Gluconobacter oxydans (strain 621H) (Gluconobacter suboxydans).